The chain runs to 173 residues: DRBM domain-containing protein 340R (173 aa).

Residues 30-102 (NSIGFLNEFC…AFKTIKELNL (73 aa)) enclose the DRBM domain.

The chain is DRBM domain-containing protein 340R from Invertebrate iridescent virus 6 (IIV-6).